A 460-amino-acid chain; its full sequence is UDP-N-acetylmuramoylalanine--D-glutamate ligase (460 aa).

115–121 (GTDGKTT) contributes to the ATP binding site.

This sequence belongs to the MurCDEF family.

It localises to the cytoplasm. The enzyme catalyses UDP-N-acetyl-alpha-D-muramoyl-L-alanine + D-glutamate + ATP = UDP-N-acetyl-alpha-D-muramoyl-L-alanyl-D-glutamate + ADP + phosphate + H(+). It participates in cell wall biogenesis; peptidoglycan biosynthesis. Cell wall formation. Catalyzes the addition of glutamate to the nucleotide precursor UDP-N-acetylmuramoyl-L-alanine (UMA). This chain is UDP-N-acetylmuramoylalanine--D-glutamate ligase, found in Chlorobium luteolum (strain DSM 273 / BCRC 81028 / 2530) (Pelodictyon luteolum).